Consider the following 559-residue polypeptide: Germacrene A synthase (559 aa).

Mg(2+) contacts are provided by aspartate 312, aspartate 316, aspartate 456, threonine 460, and glutamate 464. A DDXXD motif motif is present at residues 312 to 316 (DDTYD).

The protein belongs to the terpene synthase family. In terms of assembly, monomer. It depends on Mg(2+) as a cofactor. Expressed in glandular trichomes of all aerial tissues, with highest levels in tissues accumulating parthenolide (e.g. flowers and, to some extent, leaves).

The catalysed reaction is (2E,6E)-farnesyl diphosphate = (+)-(R)-germacrene A + diphosphate. Its pathway is secondary metabolite biosynthesis; terpenoid biosynthesis. In terms of biological role, sesquiterpene synthase involved in germacrene A biosynthesis. Germacrene A is a precursor of several sesquiterpene lactones. The chain is Germacrene A synthase from Tanacetum parthenium (Feverfew).